We begin with the raw amino-acid sequence, 152 residues long: Large-conductance mechanosensitive channel (152 aa).

The next 3 membrane-spanning stretches (helical) occupy residues 26 to 46 (VLDL…VGSA), 50 to 70 (ILTP…LFIT), and 92 to 112 (IGVF…IFWL).

It belongs to the MscL family. Homopentamer.

The protein localises to the cell inner membrane. Functionally, channel that opens in response to stretch forces in the membrane lipid bilayer. May participate in the regulation of osmotic pressure changes within the cell. This is Large-conductance mechanosensitive channel from Gluconobacter oxydans (strain 621H) (Gluconobacter suboxydans).